Here is a 205-residue protein sequence, read N- to C-terminus: Guanylyl cyclase-activating protein 1 (205 aa).

A lipid anchor (N-myristoyl glycine) is attached at glycine 2. Asparagine 3 is subject to Deamidated asparagine. 4 consecutive EF-hand domains span residues 30-48, 50-85, 86-121, and 129-164; these read SGQL…KNLS, ASNQ…VLKG, KVEQ…IRAI, and TAEE…DELL. Aspartate 63, asparagine 65, aspartate 67, tyrosine 69, glutamate 74, aspartate 99, aspartate 101, asparagine 103, cysteine 105, glutamate 110, aspartate 142, asparagine 144, aspartate 146, glutamate 148, and glutamate 153 together coordinate Ca(2+).

Retina.

In terms of biological role, regulatory protein that inhibits guanylyl cyclase when free calcium ions concentration is elevated. This Ca(2+)-sensitive regulation of retinal guanylyl cyclase is a key event in recovery of the dark state of rod photoreceptors following light exposure. This Lithobates pipiens (Northern leopard frog) protein is Guanylyl cyclase-activating protein 1 (GUCA1A).